Consider the following 214-residue polypeptide: Small ribosomal subunit protein eS6 (214 aa).

It belongs to the eukaryotic ribosomal protein eS6 family.

The sequence is that of Small ribosomal subunit protein eS6 from Saccharolobus islandicus (strain L.S.2.15 / Lassen #1) (Sulfolobus islandicus).